Reading from the N-terminus, the 60-residue chain is Short neurotoxin 1 (60 aa).

4 disulfide bridges follow: cysteine 3/cysteine 22, cysteine 17/cysteine 39, cysteine 41/cysteine 52, and cysteine 53/cysteine 58.

This sequence belongs to the three-finger toxin family. Short-chain subfamily. Type I alpha-neurotoxin sub-subfamily. As to expression, expressed by the venom gland.

It localises to the secreted. Its function is as follows. Binds to muscle nicotinic acetylcholine receptor (nAChR) and inhibit acetylcholine from binding to the receptor, thereby impairing neuromuscular transmission. This is Short neurotoxin 1 from Hydrophis cyanocinctus (Asian annulated sea snake).